Here is a 906-residue protein sequence, read N- to C-terminus: Protein translocase subunit SecA (906 aa).

ATP is bound by residues glutamine 86, 104–108, and aspartate 499; that span reads GEGKT. A disordered region spans residues 863 to 885; that stretch reads PVVSRIDPKDRNPDDPTSWGRVS. Zn(2+) contacts are provided by cysteine 890, cysteine 892, cysteine 901, and histidine 902.

This sequence belongs to the SecA family. As to quaternary structure, monomer and homodimer. Part of the essential Sec protein translocation apparatus which comprises SecA, SecYEG and auxiliary proteins SecDF-YajC and YidC. Requires Zn(2+) as cofactor.

Its subcellular location is the cell inner membrane. The protein resides in the cytoplasm. The enzyme catalyses ATP + H2O + cellular proteinSide 1 = ADP + phosphate + cellular proteinSide 2.. Functionally, part of the Sec protein translocase complex. Interacts with the SecYEG preprotein conducting channel. Has a central role in coupling the hydrolysis of ATP to the transfer of proteins into and across the cell membrane, serving both as a receptor for the preprotein-SecB complex and as an ATP-driven molecular motor driving the stepwise translocation of polypeptide chains across the membrane. In Rickettsia akari (strain Hartford), this protein is Protein translocase subunit SecA.